A 423-amino-acid polypeptide reads, in one-letter code: Type II methyltransferase M.BamHI (423 aa).

A compositionally biased stretch (basic and acidic residues) spans 397 to 414; sequence DFRQDHEGNSKGDKKNEN. Positions 397–423 are disordered; it reads DFRQDHEGNSKGDKKNENNDQISLSLE.

This sequence belongs to the N(4)/N(6)-methyltransferase family.

The catalysed reaction is a 2'-deoxycytidine in DNA + S-adenosyl-L-methionine = an N(4)-methyl-2'-deoxycytidine in DNA + S-adenosyl-L-homocysteine + H(+). A beta subtype methylase, recognizes the double-stranded sequence 5'-GGATCC-3', methylates C-5 on both strands, and protects the DNA from cleavage by the BamHI endonuclease. This Bacillus amyloliquefaciens (Bacillus velezensis) protein is Type II methyltransferase M.BamHI.